A 61-amino-acid chain; its full sequence is MSNKLKVTLIKSMNGRLQAHQQCVRGLGLRRIHQSCEVQDTPENRGMINKVAYLLKVEEVL.

It belongs to the universal ribosomal protein uL30 family. As to quaternary structure, part of the 50S ribosomal subunit.

The sequence is that of Large ribosomal subunit protein uL30 from Dichelobacter nodosus (strain VCS1703A).